A 100-amino-acid chain; its full sequence is Large ribosomal subunit protein uL23 (100 aa).

It belongs to the universal ribosomal protein uL23 family. As to quaternary structure, part of the 50S ribosomal subunit. Contacts protein L29, and trigger factor when it is bound to the ribosome.

Functionally, one of the early assembly proteins it binds 23S rRNA. One of the proteins that surrounds the polypeptide exit tunnel on the outside of the ribosome. Forms the main docking site for trigger factor binding to the ribosome. The chain is Large ribosomal subunit protein uL23 from Prochlorococcus marinus (strain MIT 9215).